We begin with the raw amino-acid sequence, 336 residues long: Dihydroorotate dehydrogenase (quinone) (336 aa).

Residues 62–66 (AGLDK) and threonine 86 contribute to the FMN site. Lysine 66 provides a ligand contact to substrate. 111-115 (NRMGF) contacts substrate. Positions 139 and 172 each coordinate FMN. Asparagine 172 is a substrate binding site. Serine 175 (nucleophile) is an active-site residue. Asparagine 177 provides a ligand contact to substrate. The FMN site is built by lysine 217 and threonine 245. Residue 246 to 247 (NT) participates in substrate binding. FMN is bound by residues glycine 268, glycine 297, and 318-319 (YS).

The protein belongs to the dihydroorotate dehydrogenase family. Type 2 subfamily. In terms of assembly, monomer. It depends on FMN as a cofactor.

The protein resides in the cell membrane. The catalysed reaction is (S)-dihydroorotate + a quinone = orotate + a quinol. The protein operates within pyrimidine metabolism; UMP biosynthesis via de novo pathway; orotate from (S)-dihydroorotate (quinone route): step 1/1. In terms of biological role, catalyzes the conversion of dihydroorotate to orotate with quinone as electron acceptor. This Baumannia cicadellinicola subsp. Homalodisca coagulata protein is Dihydroorotate dehydrogenase (quinone).